We begin with the raw amino-acid sequence, 396 residues long: Elongation factor Tu (396 aa).

A tr-type G domain is found at 10–206 (KPHVNVGTIG…ALDTYIPTPE (197 aa)). Residues 19 to 26 (GHVDHGKT) form a G1 region. 19–26 (GHVDHGKT) provides a ligand contact to GTP. Thr26 contributes to the Mg(2+) binding site. The G2 stretch occupies residues 60–64 (GITIN). Positions 81–84 (DCPG) are G3. GTP-binding positions include 81-85 (DCPGH) and 136-139 (NKCD). The interval 136–139 (NKCD) is G4. The interval 174–176 (SAK) is G5.

This sequence belongs to the TRAFAC class translation factor GTPase superfamily. Classic translation factor GTPase family. EF-Tu/EF-1A subfamily. As to quaternary structure, monomer.

The protein localises to the cytoplasm. It catalyses the reaction GTP + H2O = GDP + phosphate + H(+). Functionally, GTP hydrolase that promotes the GTP-dependent binding of aminoacyl-tRNA to the A-site of ribosomes during protein biosynthesis. This chain is Elongation factor Tu, found in Burkholderia vietnamiensis (strain G4 / LMG 22486) (Burkholderia cepacia (strain R1808)).